Reading from the N-terminus, the 946-residue chain is Sorting nexin-14 (946 aa).

Helical transmembrane passes span 24-44 (ICRQ…ASLL) and 49-69 (IHIL…YCSL). The region spanning 130–304 (SSKVDASLSE…LLIIFIDDSP (175 aa)) is the PXA domain. An RGS domain is found at 336–468 (ELKQIREQQD…CHSDEYFRQL (133 aa)). Ser-548 carries the post-translational modification Phosphoserine. The 121-residue stretch at 570–690 (PYVDFFEDPS…DFLSPNGGET (121 aa)) folds into the PX domain.

The protein belongs to the sorting nexin family. Widely expressed both in fetal and adult tissues.

The protein resides in the lysosome membrane. Its subcellular location is the late endosome membrane. The protein localises to the cell projection. It is found in the dendrite. Its function is as follows. Plays a role in maintaining normal neuronal excitability and synaptic transmission. May be involved in several stages of intracellular trafficking. Required for autophagosome clearance, possibly by mediating the fusion of lysosomes with autophagosomes. Binds phosphatidylinositol 3,5-bisphosphate (PtdIns(3,5)P2), a key component of late endosomes/lysosomes. Does not bind phosphatidylinositol 3-phosphate (PtdIns(3P)). The chain is Sorting nexin-14 (SNX14) from Homo sapiens (Human).